Consider the following 313-residue polypeptide: Zinc transporter ZitB (313 aa).

Topologically, residues 1–20 (MAHSHSHTSSHLPEDNNARR) are cytoplasmic. A helical transmembrane segment spans residues 21-41 (LLYAFGVTAGFMLVEVVGGFL). The Periplasmic portion of the chain corresponds to 42 to 47 (SGSLAL). A helical transmembrane segment spans residues 48–68 (LADAGHMLTDTAALLFALLAV). The Cytoplasmic segment spans residues 69–89 (QFSRRPPTIRHTFGWLRLTTL). Residues 90 to 110 (AAFVNAIALVVITILIVWEAI) form a helical membrane-spanning segment. Residues 111–121 (ERFRTPRPVEG) lie on the Periplasmic side of the membrane. A helical membrane pass occupies residues 122 to 142 (GMMMAIAVAGLLANILSFWLL). The Cytoplasmic portion of the chain corresponds to 143–159 (HHGSEEKNLNVRAAALH). A helical membrane pass occupies residues 160-180 (VLGDLLGSVGAIIAALIIIWT). Position 181 (glycine 181) is a topological domain, periplasmic. A helical transmembrane segment spans residues 182-202 (WTPADPILSILVSLLVLRSAW). The Cytoplasmic segment spans residues 203-313 (RLLKDSVNEL…GVSGHSHHHH (111 aa)).

This sequence belongs to the cation diffusion facilitator (CDF) transporter (TC 2.A.4) family. SLC30A subfamily.

The protein localises to the cell inner membrane. In terms of biological role, involved in zinc efflux across the cytoplasmic membrane, thus reducing zinc accumulation in the cytoplasm and rendering bacteria more resistant to zinc. It may contribute to zinc homeostasis at low concentrations of zinc. This Shigella flexneri protein is Zinc transporter ZitB (zitB).